A 112-amino-acid chain; its full sequence is Putative pterin-4-alpha-carbinolamine dehydratase (112 aa).

The protein belongs to the pterin-4-alpha-carbinolamine dehydratase family.

The catalysed reaction is (4aS,6R)-4a-hydroxy-L-erythro-5,6,7,8-tetrahydrobiopterin = (6R)-L-erythro-6,7-dihydrobiopterin + H2O. The protein is Putative pterin-4-alpha-carbinolamine dehydratase of Shewanella loihica (strain ATCC BAA-1088 / PV-4).